Here is a 427-residue protein sequence, read N- to C-terminus: Glutamate-1-semialdehyde 2,1-aminomutase (427 aa).

N6-(pyridoxal phosphate)lysine is present on K265.

The protein belongs to the class-III pyridoxal-phosphate-dependent aminotransferase family. HemL subfamily. As to quaternary structure, homodimer. It depends on pyridoxal 5'-phosphate as a cofactor.

The protein resides in the cytoplasm. The enzyme catalyses (S)-4-amino-5-oxopentanoate = 5-aminolevulinate. It functions in the pathway porphyrin-containing compound metabolism; protoporphyrin-IX biosynthesis; 5-aminolevulinate from L-glutamyl-tRNA(Glu): step 2/2. This Burkholderia pseudomallei (strain 668) protein is Glutamate-1-semialdehyde 2,1-aminomutase.